The primary structure comprises 206 residues: Homoserine/homoserine lactone efflux protein (206 aa).

6 helical membrane passes run 5–25 (WWFA…SGAI), 45–65 (GLQT…GTLF), 68–88 (SLLA…WLGI), 117–137 (FVNL…PQFI), 148–168 (LILG…YATL), and 182–202 (MKAL…LLAS).

It belongs to the Rht family.

The protein localises to the cell membrane. In terms of biological role, conducts the efflux of homoserine and homoserine lactone. The chain is Homoserine/homoserine lactone efflux protein (rhtB) from Salmonella typhimurium (strain LT2 / SGSC1412 / ATCC 700720).